Reading from the N-terminus, the 134-residue chain is Arginine decarboxylase proenzyme (134 aa).

Serine 82 serves as the catalytic Schiff-base intermediate with substrate; via pyruvic acid. Serine 82 is subject to Pyruvic acid (Ser); by autocatalysis. Histidine 87 functions as the Proton acceptor; for processing activity in the catalytic mechanism. The active-site Proton donor; for catalytic activity is cysteine 102.

It belongs to the prokaryotic AdoMetDC family. Type 1 subfamily. In terms of assembly, heterooctamer of four alpha and four beta chains arranged as a tetramer of alpha/beta heterodimers. It depends on pyruvate as a cofactor. In terms of processing, is synthesized initially as an inactive proenzyme. Formation of the active enzyme involves a self-maturation process in which the active site pyruvoyl group is generated from an internal serine residue via an autocatalytic post-translational modification. Two non-identical subunits are generated from the proenzyme in this reaction, and the pyruvate is formed at the N-terminus of the alpha chain, which is derived from the carboxyl end of the proenzyme. The post-translation cleavage follows an unusual pathway, termed non-hydrolytic serinolysis, in which the side chain hydroxyl group of the serine supplies its oxygen atom to form the C-terminus of the beta chain, while the remainder of the serine residue undergoes an oxidative deamination to produce ammonia and the pyruvoyl group blocking the N-terminus of the alpha chain.

The catalysed reaction is L-arginine + H(+) = agmatine + CO2. The protein operates within amine and polyamine biosynthesis; agmatine biosynthesis; agmatine from L-arginine: step 1/1. Its function is as follows. Specifically catalyzes the decarboxylation of L-arginine to agmatine. Has no S-adenosylmethionine decarboxylase (AdoMetDC) activity. The polypeptide is Arginine decarboxylase proenzyme (Saccharolobus islandicus (strain M.16.4 / Kamchatka #3) (Sulfolobus islandicus)).